The sequence spans 331 residues: Protein REVEILLE 6 (331 aa).

Positions 67-121 constitute an HTH myb-type domain; it reads TITKSRESWTEPEHDKFLEALQLFDRDWKKIEAFIGSKTVIQIRSHAQKYFLKVQ. The segment at residues 94–117 is a DNA-binding region (H-T-H motif); it reads WKKIEAFIGSKTVIQIRSHAQKYF. Disordered stretches follow at residues 122–166, 203–237, and 309–331; these read KSGT…EPND, LPKA…GNVG, and SETA…EIST. Polar residues predominate over residues 150-165; that stretch reads VQLQVPGSFKSTSEPN. Positions 211–220 are enriched in low complexity; it reads NNNCSSSSEN. Composition is skewed to basic and acidic residues over residues 226–235 and 322–331; these read SNRDARDHGN and LNKDPPEIST.

The protein resides in the nucleus. In terms of biological role, probable transcription factor. RVE4, RVE6 and RVE8 are components of the circadian system acting synergistically to regulate flowering time, redundantly to regulate leaf growth, and antagonistically to regulate hypocotyl elongation; their action seems independent of ZTL and HY5. This is Protein REVEILLE 6 from Arabidopsis thaliana (Mouse-ear cress).